Reading from the N-terminus, the 624-residue chain is Low affinity potassium transport system protein Kup (624 aa).

The next 12 helical transmembrane spans lie at 9 to 29 (LPAITLAAIGVVYGDIGTSPL), 49 to 69 (VFGFLSLIFWLLIFVVSIKYL), 103 to 123 (VIMGLIGGSFFYGEVVITPAI), 137 to 157 (PQLDTWIVPLSIIVLTLLFMI), 165 to 185 (VGKLFAPIMLTWFLILAGLGL), 213 to 233 (VSFIALGAVVLSITGVEALYA), 247 to 267 (WFTVVLPSLTLNYFGQGALLL), 276 to 296 (PFFLLAPDWALIPLLIIAALA), 337 to 357 (IYIPFVNWMLYVAVVIVIVIV), 365 to 385 (LAAAYGIAVTGTMVLTSILST), 398 to 418 (FVALILIAFLCVDIPLFTANL), and 421 to 441 (LLSGGWLPLSLGTVMFIVMTT).

It belongs to the HAK/KUP transporter (TC 2.A.72) family.

Its subcellular location is the cell inner membrane. The enzyme catalyses K(+)(in) + H(+)(in) = K(+)(out) + H(+)(out). Its function is as follows. Responsible for the low-affinity transport of potassium into the cell. Likely operates as a K(+):H(+) symporter. The chain is Low affinity potassium transport system protein Kup from Shigella dysenteriae serotype 1 (strain Sd197).